The sequence spans 98 residues: Protein PROLINE CONTENT ALTERNATIVE 22 (98 aa).

In terms of tissue distribution, mainly expressed in flowers, to a lower extent, in roots and, at very low levels, in leaves and stems.

It is found in the cytoplasm. Functionally, acts as an opponent to RZF1 during early seedling growth in term of proline accumulation in response to dehydration and abscisic acid (ABA). Confers sensitivity to abiotic stresses such as ABA, drought and osmotic stress (e.g. mannitol treatment) by preventing proline accumulation and by reducing the expression of dehydration-inducible genes. Promotes the production of lipid peroxidation by drought stress thus leading to malondialdehyde (MDA) synthesis. Prevents pollen tube elongation. Necessary for RZF1 expression in seedlings. The sequence is that of Protein PROLINE CONTENT ALTERNATIVE 22 from Arabidopsis thaliana (Mouse-ear cress).